Here is a 313-residue protein sequence, read N- to C-terminus: MMENYKHTTVLLDEAVNGLNIRPDGIYIDGTFGRGGHSRLILSRLGAEGRLLAIDRDPQAIAVAKTIDDPRFSIVHGPFSQLADYVDERNLTGKIDGILLDLGVSSPQLDDAERGFSFMRDGPLDMRMDPTRGQSAAEWLQTAEEADIAWVIKTFGEERFGKRIARAIVERNRIEPMTRTKELAEVIAAAMPVKDKHKHPATRTFQAVRIWVNSELEEIEQALKSSLSVLAPGGRLSIISFHSLEDRIVKRFMREQSRGPQVPAGIPMTEAQLKKLGGRELRALGKLMPGEEEVAENPRARSSVLRIAERTNA.

S-adenosyl-L-methionine is bound by residues 35-37 (GGH), Asp-55, Phe-79, Asp-101, and Gln-108.

Belongs to the methyltransferase superfamily. RsmH family.

The protein resides in the cytoplasm. The catalysed reaction is cytidine(1402) in 16S rRNA + S-adenosyl-L-methionine = N(4)-methylcytidine(1402) in 16S rRNA + S-adenosyl-L-homocysteine + H(+). Its function is as follows. Specifically methylates the N4 position of cytidine in position 1402 (C1402) of 16S rRNA. The chain is Ribosomal RNA small subunit methyltransferase H from Klebsiella pneumoniae (strain 342).